Consider the following 311-residue polypeptide: tRNA dimethylallyltransferase (311 aa).

11-18 provides a ligand contact to ATP; the sequence is GPTASGKS. Residue 13–18 participates in substrate binding; it reads TASGKS. 2 interaction with substrate tRNA regions span residues 36–39 and 160–164; these read DSMQ and QRLIR.

The protein belongs to the IPP transferase family. Monomer. Mg(2+) is required as a cofactor.

It catalyses the reaction adenosine(37) in tRNA + dimethylallyl diphosphate = N(6)-dimethylallyladenosine(37) in tRNA + diphosphate. Catalyzes the transfer of a dimethylallyl group onto the adenine at position 37 in tRNAs that read codons beginning with uridine, leading to the formation of N6-(dimethylallyl)adenosine (i(6)A). This chain is tRNA dimethylallyltransferase, found in Rickettsia prowazekii (strain Madrid E).